The chain runs to 244 residues: Phosphoadenosine 5'-phosphosulfate reductase (244 aa).

The active-site Nucleophile; cysteine thiosulfonate intermediate is cysteine 239.

The protein belongs to the PAPS reductase family. CysH subfamily.

Its subcellular location is the cytoplasm. It catalyses the reaction [thioredoxin]-disulfide + sulfite + adenosine 3',5'-bisphosphate + 2 H(+) = [thioredoxin]-dithiol + 3'-phosphoadenylyl sulfate. Its pathway is sulfur metabolism; hydrogen sulfide biosynthesis; sulfite from sulfate: step 3/3. Its function is as follows. Catalyzes the formation of sulfite from phosphoadenosine 5'-phosphosulfate (PAPS) using thioredoxin as an electron donor. This is Phosphoadenosine 5'-phosphosulfate reductase from Cronobacter sakazakii (strain ATCC BAA-894) (Enterobacter sakazakii).